We begin with the raw amino-acid sequence, 350 residues long: Protein RecA (350 aa).

G68 to T75 serves as a coordination point for ATP.

Belongs to the RecA family.

It localises to the cytoplasm. Functionally, can catalyze the hydrolysis of ATP in the presence of single-stranded DNA, the ATP-dependent uptake of single-stranded DNA by duplex DNA, and the ATP-dependent hybridization of homologous single-stranded DNAs. It interacts with LexA causing its activation and leading to its autocatalytic cleavage. This is Protein RecA from Symbiobacterium thermophilum (strain DSM 24528 / JCM 14929 / IAM 14863 / T).